Here is a 347-residue protein sequence, read N- to C-terminus: UDP-3-O-acylglucosamine N-acyltransferase 1 (347 aa).

Histidine 246 acts as the Proton acceptor in catalysis.

This sequence belongs to the transferase hexapeptide repeat family. LpxD subfamily. In terms of assembly, homotrimer.

It carries out the reaction a UDP-3-O-[(3R)-3-hydroxyacyl]-alpha-D-glucosamine + a (3R)-hydroxyacyl-[ACP] = a UDP-2-N,3-O-bis[(3R)-3-hydroxyacyl]-alpha-D-glucosamine + holo-[ACP] + H(+). The protein operates within bacterial outer membrane biogenesis; LPS lipid A biosynthesis. Its function is as follows. Catalyzes the N-acylation of UDP-3-O-acylglucosamine using 3-hydroxyacyl-ACP as the acyl donor. Is involved in the biosynthesis of lipid A, a phosphorylated glycolipid that anchors the lipopolysaccharide to the outer membrane of the cell. The polypeptide is UDP-3-O-acylglucosamine N-acyltransferase 1 (Francisella tularensis subsp. holarctica (strain LVS)).